The following is a 276-amino-acid chain: 4-deoxy-L-threo-5-hexosulose-uronate ketol-isomerase (276 aa).

His194, His196, Glu201, and His243 together coordinate Zn(2+).

Belongs to the KduI family. Requires Zn(2+) as cofactor.

It carries out the reaction 5-dehydro-4-deoxy-D-glucuronate = 3-deoxy-D-glycero-2,5-hexodiulosonate. Its pathway is glycan metabolism; pectin degradation; 2-dehydro-3-deoxy-D-gluconate from pectin: step 4/5. In terms of biological role, catalyzes the isomerization of 5-dehydro-4-deoxy-D-glucuronate to 3-deoxy-D-glycero-2,5-hexodiulosonate. The protein is 4-deoxy-L-threo-5-hexosulose-uronate ketol-isomerase of Lachnoclostridium phytofermentans (strain ATCC 700394 / DSM 18823 / ISDg) (Clostridium phytofermentans).